The sequence spans 488 residues: 3-octaprenyl-4-hydroxybenzoate carboxy-lyase (488 aa).

Asn-172 is a Mn(2+) binding site. Residues 175 to 177 (IYR), 189 to 191 (RWL), and 194 to 195 (RG) contribute to the prenylated FMN site. Glu-238 contributes to the Mn(2+) binding site. Asp-287 acts as the Proton donor in catalysis.

Belongs to the UbiD family. Homohexamer. Prenylated FMN is required as a cofactor. It depends on Mn(2+) as a cofactor.

Its subcellular location is the cell membrane. It carries out the reaction a 4-hydroxy-3-(all-trans-polyprenyl)benzoate + H(+) = a 2-(all-trans-polyprenyl)phenol + CO2. It participates in cofactor biosynthesis; ubiquinone biosynthesis. In terms of biological role, catalyzes the decarboxylation of 3-octaprenyl-4-hydroxy benzoate to 2-octaprenylphenol, an intermediate step in ubiquinone biosynthesis. This chain is 3-octaprenyl-4-hydroxybenzoate carboxy-lyase, found in Pseudoalteromonas translucida (strain TAC 125).